The chain runs to 184 residues: ADP-ribosylation factor-like protein 2 (184 aa).

Residue glycine 2 is the site of N-myristoyl glycine attachment. GTP contacts are provided by residues 23–30, 66–70, glycine 68, and 125–128; these read GLDNAGKT, DVGGQ, and NKSD.

Belongs to the small GTPase superfamily. Arf family. In the embryo, strongly expressed in migrating hypodermal cells. Shortly before the beginning of elongation, expressed in many developing neurons where it persists throughout adulthood. In the larva, highly expressed in migrating hypodermal cells and the uterus. Also expressed in vulva, spermatheca, sheath cells, distal tips cells and proctoderm of the male tail.

It localises to the cytoplasm. Its subcellular location is the cell membrane. The protein localises to the cytoskeleton. It is found in the microtubule organizing center. The protein resides in the centrosome. GTP-binding protein that functions in embryogenesis, cytokinesis, germline development and microtubulule cytoskeleton dynamics. The polypeptide is ADP-ribosylation factor-like protein 2 (evl-20) (Caenorhabditis elegans).